A 328-amino-acid chain; its full sequence is Phosphate acyltransferase (328 aa).

The protein belongs to the PlsX family. As to quaternary structure, homodimer. Probably interacts with PlsY.

It localises to the cytoplasm. It catalyses the reaction a fatty acyl-[ACP] + phosphate = an acyl phosphate + holo-[ACP]. The protein operates within lipid metabolism; phospholipid metabolism. Its function is as follows. Catalyzes the reversible formation of acyl-phosphate (acyl-PO(4)) from acyl-[acyl-carrier-protein] (acyl-ACP). This enzyme utilizes acyl-ACP as fatty acyl donor, but not acyl-CoA. The polypeptide is Phosphate acyltransferase (Geobacillus thermodenitrificans (strain NG80-2)).